Consider the following 159-residue polypeptide: Early E3 18.5 kDa glycoprotein (159 aa).

Positions 1-17 (MRYMILGLLALAAVCSA) are cleaved as a signal peptide. Residues 18–123 (AKKVEFKEPA…PPQKCLENTG (106 aa)) are Lumenal-facing. Cystine bridges form between cysteine 28–cysteine 45 and cysteine 39–cysteine 100. Asparagine 29 and asparagine 78 each carry an N-linked (GlcNAc...) asparagine; by host glycan. The helical transmembrane segment at 124 to 144 (TFCSTALLITALALVCTLLYL) threads the bilayer. Residues 145–159 (KYKSRRSFIDEKKMP) are Cytoplasmic-facing. Residues 156–159 (KKMP) carry the Di-lysine motif motif.

Belongs to the adenoviridae E19 family. Post-translationally, both disulfide bonds are absolutely critical for the interaction with MHC antigens. In terms of processing, N-glycosylated; high-mannose.

It localises to the host endoplasmic reticulum membrane. Its function is as follows. Binds and retains class I heavy chains in the endoplasmic reticulum during the early period of virus infection, thereby impairing their transport to the cell surface. Also delays the expression of class I alleles that it cannot affect by direct retention. Binds transporters associated with antigen processing (TAP) and acts as a tapasin inhibitor, preventing class I/TAP association. In consequence, infected cells are masked for immune recognition by cytotoxic T-lymphocytes. This Homo sapiens (Human) protein is Early E3 18.5 kDa glycoprotein.